The sequence spans 276 residues: Small ribosomal subunit protein uS3 (276 aa).

Positions 38-106 (IRRMMTKGME…QVQLNILEVK (69 aa)) constitute a KH type-2 domain. Positions 216–228 (NAAARAGNRPARG) are enriched in low complexity. The disordered stretch occupies residues 216-276 (NAAARAGNRP…PAAESTGTEA (61 aa)). Basic and acidic residues predominate over residues 229 to 245 (GADRPAGRGGRGGERGG). Over residues 254 to 269 (PAAEAPKADAAAAPAA) the composition is skewed to low complexity.

It belongs to the universal ribosomal protein uS3 family. Part of the 30S ribosomal subunit. Forms a tight complex with proteins S10 and S14.

Functionally, binds the lower part of the 30S subunit head. Binds mRNA in the 70S ribosome, positioning it for translation. The sequence is that of Small ribosomal subunit protein uS3 from Streptomyces griseus subsp. griseus (strain JCM 4626 / CBS 651.72 / NBRC 13350 / KCC S-0626 / ISP 5235).